Reading from the N-terminus, the 527-residue chain is Cytochrome b5 reductase 4 (527 aa).

A disordered region spans residues 1 to 24 (MLNVPSQAFPAAGSQQRVAPAGQS). A Cytochrome b5 heme-binding domain is found at 56-132 (LIEVTEDELK…LKECLVGRMA (77 aa)). Residues H91 and H114 each coordinate heme. The segment at 138–171 (ALQAHTEKTESTHLNGLSAPPSLRPEPLSAPLPA) is disordered. The region spanning 173–264 (DHRPRYDWFQ…SVKEKWTQLG (92 aa)) is the CS domain. Positions 281 to 392 (LFYRECVLLS…GGPEGSFTLR (112 aa)) constitute an FAD-binding FR-type domain. FAD contacts are provided by residues 372–387 (ANLPIGASLSVGGPEG) and 399–431 (HLYMLAAGTGFTPMARLIRLALQDFTVIRKMKL).

Belongs to the flavoprotein pyridine nucleotide cytochrome reductase family. FAD serves as cofactor.

It localises to the endoplasmic reticulum. It carries out the reaction 2 Fe(III)-[cytochrome b5] + NADH = 2 Fe(II)-[cytochrome b5] + NAD(+) + H(+). In terms of biological role, NADH-cytochrome b5 reductase involved in endoplasmic reticulum stress response pathway. This Danio rerio (Zebrafish) protein is Cytochrome b5 reductase 4 (cyb5r4).